The primary structure comprises 168 residues: DNA damage-inducible transcript 3 protein (168 aa).

Positions 10 to 18 (FETVSSWEL) are interaction with TRIB3. An N-terminal region spans residues 10-26 (FETVSSWELEAWYEDLQ). S14, S15, S30, and S31 each carry phosphoserine; by CK2. The interval 34 to 130 (IGGTYISSPG…EKEQENERKV (97 aa)) is disordered. The segment covering 73-88 (TSTSQSPRSPDSSQSS) has biased composition (low complexity). Phosphoserine; by MAPK14 is present on residues S78 and S81. The bZIP domain occupies 98 to 161 (QGRTRKRKQS…ETTRRALIDR (64 aa)). Positions 100–129 (RTRKRKQSGQCAARAGKQRMKEKEQENERK) are basic motif. Over residues 118–130 (RMKEKEQENERKV) the composition is skewed to basic and acidic residues. The leucine-zipper stretch occupies residues 133-147 (LAEENERLKLEIERL).

This sequence belongs to the bZIP family. In terms of assembly, heterodimer. Interacts with TCF7L2/TCF4, EP300/P300, HDAC1, HDAC5 and HDAC6. Interacts with TRIB3 which blocks its association with EP300/P300. Interacts with FOXO3, CEBPB and ATF4. Post-translationally, ubiquitinated, leading to its degradation by the proteasome. Phosphorylation at serine residues by MAPK14 enhances its transcriptional activation activity while phosphorylation at serine residues by CK2 inhibits its transcriptional activation activity.

It is found in the cytoplasm. Its subcellular location is the nucleus. In terms of biological role, multifunctional transcription factor in ER stress response. Plays an essential role in the response to a wide variety of cell stresses and induces cell cycle arrest and apoptosis in response to ER stress. Plays a dual role both as an inhibitor of CCAAT/enhancer-binding protein (C/EBP) function and as an activator of other genes. Acts as a dominant-negative regulator of C/EBP-induced transcription: dimerizes with members of the C/EBP family, impairs their association with C/EBP binding sites in the promoter regions, and inhibits the expression of C/EBP regulated genes. Positively regulates the transcription of TRIB3, IL6, IL8, IL23, TNFRSF10B/DR5, PPP1R15A/GADD34, BBC3/PUMA, BCL2L11/BIM and ERO1L. Negatively regulates; expression of BCL2 and MYOD1, ATF4-dependent transcriptional activation of asparagine synthetase (ASNS), CEBPA-dependent transcriptional activation of hepcidin (HAMP) and CEBPB-mediated expression of peroxisome proliferator-activated receptor gamma (PPARG). Inhibits the canonical Wnt signaling pathway by binding to TCF7L2/TCF4, impairing its DNA-binding properties and repressing its transcriptional activity. Plays a regulatory role in the inflammatory response through the induction of caspase-11 (CASP4/CASP11) which induces the activation of caspase-1 (CASP1) and both these caspases increase the activation of pro-IL1B to mature IL1B which is involved in the inflammatory response. Acts as a major regulator of postnatal neovascularization through regulation of endothelial nitric oxide synthase (NOS3)-related signaling. The chain is DNA damage-inducible transcript 3 protein (Ddit3) from Rattus norvegicus (Rat).